A 284-amino-acid polypeptide reads, in one-letter code: Diaminopimelate epimerase (284 aa).

The substrate site is built by Asn-20, Gln-53, and Asn-73. Cys-82 functions as the Proton donor in the catalytic mechanism. Substrate-binding positions include 83–84 (GN), Asn-167, Asn-200, and 218–219 (ER). Catalysis depends on Cys-227, which acts as the Proton acceptor. Residue 228–229 (GS) coordinates substrate.

This sequence belongs to the diaminopimelate epimerase family. As to quaternary structure, homodimer.

Its subcellular location is the cytoplasm. It carries out the reaction (2S,6S)-2,6-diaminopimelate = meso-2,6-diaminopimelate. The protein operates within amino-acid biosynthesis; L-lysine biosynthesis via DAP pathway; DL-2,6-diaminopimelate from LL-2,6-diaminopimelate: step 1/1. In terms of biological role, catalyzes the stereoinversion of LL-2,6-diaminopimelate (L,L-DAP) to meso-diaminopimelate (meso-DAP), a precursor of L-lysine and an essential component of the bacterial peptidoglycan. The sequence is that of Diaminopimelate epimerase from Xanthomonas campestris pv. campestris (strain ATCC 33913 / DSM 3586 / NCPPB 528 / LMG 568 / P 25).